The following is a 372-amino-acid chain: MSVVKIPLVKKKSLRQNLIENGKLKEFMRTHKYNLGSKYIREAATLVSEQPLQNYLDTEYFGTIGIGTPAQDFTVIFDTGSSNLWVPSIYCSSEACTNHNRFNPQDSSTYEATSETLSITYGTGSMTGILGYDTVQVGGISDTNQIFGLSETEPGSFLYYAPFDGILGLAYPSISSSGATPVFDNIWDQGLVSQDLFSVYLSSNEESGSVVIFGDIDSSYYSGSLNWVPVSVEGYWQITVDSITMNGESIACSDGCQAIVDTGTSLLAGPTTAISNIQSYIGASEDSSGEVVISCSSIDSLPDIVFTINGVQYPVPPSAYILQSNGICSSGFEGMDISTSSGDLWILGDVFIRQYFTVFDRGNNQIGLAPVA.

A propeptide spans 1 to 42 (activation peptide); that stretch reads MSVVKIPLVKKKSLRQNLIENGKLKEFMRTHKYNLGSKYIRE. One can recognise a Peptidase A1 domain in the interval 60 to 369; sequence YFGTIGIGTP…DRGNNQIGLA (310 aa). D78 is a catalytic residue. Cysteines 91 and 96 form a disulfide. At S114 the chain carries Phosphoserine. The cysteines at positions 252 and 256 are disulfide-linked. Residue D261 is part of the active site. A disulfide bond links C295 and C328.

Belongs to the peptidase A1 family.

The protein resides in the secreted. The catalysed reaction is Preferential cleavage: hydrophobic, preferably aromatic, residues in P1 and P1' positions. Cleaves 1-Phe-|-Val-2, 4-Gln-|-His-5, 13-Glu-|-Ala-14, 14-Ala-|-Leu-15, 15-Leu-|-Tyr-16, 16-Tyr-|-Leu-17, 23-Gly-|-Phe-24, 24-Phe-|-Phe-25 and 25-Phe-|-Tyr-26 bonds in the B chain of insulin.. Its function is as follows. Shows particularly broad specificity; although bonds involving phenylalanine and leucine are preferred, many others are also cleaved to some extent. The chain is Pepsin A (PGA) from Bos taurus (Bovine).